A 310-amino-acid polypeptide reads, in one-letter code: Homeobox protein Hox-A13a (310 aa).

Residues 244 to 303 (GRKKRVPYTKVQLKELEREYATNKFITKDKRRRISAQTNLSERQVTIWFQNRRVKEKKVV) constitute a DNA-binding region (homeobox).

The protein belongs to the Abd-B homeobox family.

The protein resides in the nucleus. In terms of biological role, sequence-specific transcription factor which is part of a developmental regulatory system that provides cells with specific positional identities on the anterior-posterior axis. This is Homeobox protein Hox-A13a (hoxa13a) from Danio rerio (Zebrafish).